We begin with the raw amino-acid sequence, 315 residues long: Olfactory receptor 3A10 (315 aa).

Residues 1–28 lie on the Extracellular side of the membrane; sequence MEPGAWGNRTAVTDFILLGLTGNVRLQP. N-linked (GlcNAc...) asparagine glycosylation is present at asparagine 8. The chain crosses the membrane as a helical span at residues 29–49; it reads ILFVVFFFAYIVTVGGNLSIL. Topologically, residues 50–68 are cytoplasmic; the sequence is AAIFVEPKLHTPMYYFLGN. The helical transmembrane segment at 69 to 89 threads the bilayer; it reads LSLLDIGCISVTVPPMLVCLL. Topologically, residues 90–97 are extracellular; sequence AHECRVPY. A helical membrane pass occupies residues 98–118; that stretch reads AACISQLFFFHLLAGVDCHLL. Cysteine 100 and cysteine 192 are disulfide-bonded. Over 119–145 the chain is Cytoplasmic; sequence TAMAYDRYLAICQPLTYSTRMSREVQG. Residues 146–166 traverse the membrane as a helical segment; it reads TLVGICCTVSFINALTHTVAV. Topologically, residues 167 to 200 are extracellular; it reads SVLDFCGPNVVNHFYCDLPPLFQLSCSSIYLNGQ. A helical transmembrane segment spans residues 201–221; that stretch reads LLFVGATFMGVVPMILISVSY. Residues 222–239 lie on the Cytoplasmic side of the membrane; it reads AHVAAAVLRIRSTEGRKK. The helical transmembrane segment at 240–260 threads the bilayer; the sequence is AFSTCGSHLTVVCIFYGTGFF. Residues 261–274 lie on the Extracellular side of the membrane; that stretch reads SYMRLGSVSASDKD. A helical transmembrane segment spans residues 275–295; sequence KGIGILNTILSPMLNPLIYSL. The Cytoplasmic segment spans residues 296–315; that stretch reads RNPDVQGALKRVLTGKRYPV.

This sequence belongs to the G-protein coupled receptor 1 family.

The protein resides in the cell membrane. Functionally, odorant receptor. The chain is Olfactory receptor 3A10 from Mus musculus (Mouse).